The sequence spans 169 residues: Adenine phosphoribosyltransferase (169 aa).

This sequence belongs to the purine/pyrimidine phosphoribosyltransferase family. In terms of assembly, homodimer.

The protein resides in the cytoplasm. The enzyme catalyses AMP + diphosphate = 5-phospho-alpha-D-ribose 1-diphosphate + adenine. It participates in purine metabolism; AMP biosynthesis via salvage pathway; AMP from adenine: step 1/1. Functionally, catalyzes a salvage reaction resulting in the formation of AMP, that is energically less costly than de novo synthesis. The sequence is that of Adenine phosphoribosyltransferase from Mycoplasmopsis synoviae (strain 53) (Mycoplasma synoviae).